Consider the following 353-residue polypeptide: UDP-3-O-acylglucosamine N-acyltransferase (353 aa).

His258 functions as the Proton acceptor in the catalytic mechanism.

Belongs to the transferase hexapeptide repeat family. LpxD subfamily. In terms of assembly, homotrimer.

The enzyme catalyses a UDP-3-O-[(3R)-3-hydroxyacyl]-alpha-D-glucosamine + a (3R)-hydroxyacyl-[ACP] = a UDP-2-N,3-O-bis[(3R)-3-hydroxyacyl]-alpha-D-glucosamine + holo-[ACP] + H(+). It functions in the pathway bacterial outer membrane biogenesis; LPS lipid A biosynthesis. Catalyzes the N-acylation of UDP-3-O-acylglucosamine using 3-hydroxyacyl-ACP as the acyl donor. Is involved in the biosynthesis of lipid A, a phosphorylated glycolipid that anchors the lipopolysaccharide to the outer membrane of the cell. This Parvibaculum lavamentivorans (strain DS-1 / DSM 13023 / NCIMB 13966) protein is UDP-3-O-acylglucosamine N-acyltransferase.